The following is a 498-amino-acid chain: Cytochrome P450 monooxygenase astB (498 aa).

Residues 7-27 (FTTMPVVLLVGLVLYQLLAFT) form a helical membrane-spanning segment. Residues Asn-237, Asn-248, and Asn-346 are each glycosylated (N-linked (GlcNAc...) asparagine). Cys-425 is a binding site for heme.

The protein belongs to the cytochrome P450 family. It depends on heme as a cofactor.

It is found in the membrane. The enzyme catalyses preasperterpenoid A + 4 reduced [NADPH--hemoprotein reductase] + 4 O2 = asperterpenoid A + 4 oxidized [NADPH--hemoprotein reductase] + 5 H2O + 5 H(+). It catalyses the reaction asperterpenoid A + 2 reduced [NADPH--hemoprotein reductase] + 2 O2 = asperterpenoid B + 2 oxidized [NADPH--hemoprotein reductase] + 3 H2O + 3 H(+). Its pathway is secondary metabolite biosynthesis; terpenoid biosynthesis. Cytochrome P450 monooxygenase; part of the gene cluster that mediates the biosynthesis of the asperterpenoids, sesterterpenes that exhibit anti-tuberculosis activity. The first step of the pathway is performed by the sesterterpene synthase astC that possesses both prenyl transferase and terpene cyclase activity, converting isopentenyl diphosphate and dimethylallyl diphosphate into geranylfarnesyl diphosphate (GFPP) and further converting GFPP into preasperterpenoid A, respectively. The cytochrome P450 monooxygenase astB then dually oxidizes preasperterpenoid A to produce asperterpenoid A along with a minor product, asperterpenoid B. Finally, the cytochrome P450 monooxygenase astA converts asperterpenoid A into asperterpenoid C. The protein is Cytochrome P450 monooxygenase astB of Talaromyces wortmannii (Penicillium wortmannii).